Consider the following 290-residue polypeptide: 4-hydroxy-tetrahydrodipicolinate synthase (290 aa).

A pyruvate-binding site is contributed by T45. The active-site Proton donor/acceptor is Y133. K161 acts as the Schiff-base intermediate with substrate in catalysis. I203 contributes to the pyruvate binding site.

This sequence belongs to the DapA family. Homotetramer; dimer of dimers.

It localises to the cytoplasm. It catalyses the reaction L-aspartate 4-semialdehyde + pyruvate = (2S,4S)-4-hydroxy-2,3,4,5-tetrahydrodipicolinate + H2O + H(+). It functions in the pathway amino-acid biosynthesis; L-lysine biosynthesis via DAP pathway; (S)-tetrahydrodipicolinate from L-aspartate: step 3/4. Functionally, catalyzes the condensation of (S)-aspartate-beta-semialdehyde [(S)-ASA] and pyruvate to 4-hydroxy-tetrahydrodipicolinate (HTPA). This chain is 4-hydroxy-tetrahydrodipicolinate synthase, found in Cellvibrio japonicus (strain Ueda107) (Pseudomonas fluorescens subsp. cellulosa).